The primary structure comprises 192 residues: Imidazoleglycerol-phosphate dehydratase (192 aa).

Belongs to the imidazoleglycerol-phosphate dehydratase family.

The protein resides in the cytoplasm. It catalyses the reaction D-erythro-1-(imidazol-4-yl)glycerol 3-phosphate = 3-(imidazol-4-yl)-2-oxopropyl phosphate + H2O. Its pathway is amino-acid biosynthesis; L-histidine biosynthesis; L-histidine from 5-phospho-alpha-D-ribose 1-diphosphate: step 6/9. The chain is Imidazoleglycerol-phosphate dehydratase from Hydrogenobaculum sp. (strain Y04AAS1).